A 258-amino-acid chain; its full sequence is Tryptophan synthase alpha chain (258 aa).

Active-site proton acceptor residues include Glu47 and Asp58.

This sequence belongs to the TrpA family. Tetramer of two alpha and two beta chains.

The enzyme catalyses (1S,2R)-1-C-(indol-3-yl)glycerol 3-phosphate + L-serine = D-glyceraldehyde 3-phosphate + L-tryptophan + H2O. It functions in the pathway amino-acid biosynthesis; L-tryptophan biosynthesis; L-tryptophan from chorismate: step 5/5. Its function is as follows. The alpha subunit is responsible for the aldol cleavage of indoleglycerol phosphate to indole and glyceraldehyde 3-phosphate. The protein is Tryptophan synthase alpha chain of Bacillus cereus (strain AH820).